The sequence spans 862 residues: DNA gyrase subunit A (862 aa).

The Topo IIA-type catalytic domain occupies 38–501 (LPDARDGLKP…DYDDIDVEDL (464 aa)). Tyr-126 serves as the catalytic O-(5'-phospho-DNA)-tyrosine intermediate. Positions 528 to 534 (QKRGGKG) match the GyrA-box motif. A disordered region spans residues 843-862 (KEESDDDDIVADDTQEQDME). The span at 845 to 862 (ESDDDDIVADDTQEQDME) shows a compositional bias: acidic residues.

Belongs to the type II topoisomerase GyrA/ParC subunit family. Heterotetramer, composed of two GyrA and two GyrB chains. In the heterotetramer, GyrA contains the active site tyrosine that forms a transient covalent intermediate with DNA, while GyrB binds cofactors and catalyzes ATP hydrolysis.

It is found in the cytoplasm. The catalysed reaction is ATP-dependent breakage, passage and rejoining of double-stranded DNA.. Its function is as follows. A type II topoisomerase that negatively supercoils closed circular double-stranded (ds) DNA in an ATP-dependent manner to modulate DNA topology and maintain chromosomes in an underwound state. Negative supercoiling favors strand separation, and DNA replication, transcription, recombination and repair, all of which involve strand separation. Also able to catalyze the interconversion of other topological isomers of dsDNA rings, including catenanes and knotted rings. Type II topoisomerases break and join 2 DNA strands simultaneously in an ATP-dependent manner. This chain is DNA gyrase subunit A, found in Campylobacter fetus.